Here is a 469-residue protein sequence, read N- to C-terminus: 3-isopropylmalate dehydratase large subunit (469 aa).

The [4Fe-4S] cluster site is built by Cys348, Cys409, and Cys412.

This sequence belongs to the aconitase/IPM isomerase family. LeuC type 1 subfamily. In terms of assembly, heterodimer of LeuC and LeuD. It depends on [4Fe-4S] cluster as a cofactor.

The enzyme catalyses (2R,3S)-3-isopropylmalate = (2S)-2-isopropylmalate. It participates in amino-acid biosynthesis; L-leucine biosynthesis; L-leucine from 3-methyl-2-oxobutanoate: step 2/4. Its function is as follows. Catalyzes the isomerization between 2-isopropylmalate and 3-isopropylmalate, via the formation of 2-isopropylmaleate. The polypeptide is 3-isopropylmalate dehydratase large subunit (Nitrosococcus oceani (strain ATCC 19707 / BCRC 17464 / JCM 30415 / NCIMB 11848 / C-107)).